The sequence spans 512 residues: ATP synthase subunit alpha (512 aa).

An ATP-binding site is contributed by 169–176 (GDRQTGKT).

Belongs to the ATPase alpha/beta chains family. As to quaternary structure, F-type ATPases have 2 components, CF(1) - the catalytic core - and CF(0) - the membrane proton channel. CF(1) has five subunits: alpha(3), beta(3), gamma(1), delta(1), epsilon(1). CF(0) has three main subunits: a(1), b(2) and c(9-12). The alpha and beta chains form an alternating ring which encloses part of the gamma chain. CF(1) is attached to CF(0) by a central stalk formed by the gamma and epsilon chains, while a peripheral stalk is formed by the delta and b chains.

It localises to the cell inner membrane. It carries out the reaction ATP + H2O + 4 H(+)(in) = ADP + phosphate + 5 H(+)(out). Functionally, produces ATP from ADP in the presence of a proton gradient across the membrane. The alpha chain is a regulatory subunit. This Leptothrix cholodnii (strain ATCC 51168 / LMG 8142 / SP-6) (Leptothrix discophora (strain SP-6)) protein is ATP synthase subunit alpha.